The sequence spans 794 residues: Phenylalanine--tRNA ligase beta subunit (794 aa).

Residues 39-154 (SSSFSSIITA…ANTPLGESAC (116 aa)) enclose the tRNA-binding domain. The 79-residue stretch at 403-481 (PPSPTLTLRT…QPWKIEKKKA (79 aa)) folds into the B5 domain. Mg(2+)-binding residues include Asp457, Asp463, Glu466, and Glu467. The 97-residue stretch at 697–793 (PIYPSSFRDI…QLDDTKGTID (97 aa)) folds into the FDX-ACB domain.

The protein belongs to the phenylalanyl-tRNA synthetase beta subunit family. Type 1 subfamily. As to quaternary structure, tetramer of two alpha and two beta subunits. Mg(2+) is required as a cofactor.

It localises to the cytoplasm. The enzyme catalyses tRNA(Phe) + L-phenylalanine + ATP = L-phenylalanyl-tRNA(Phe) + AMP + diphosphate + H(+). The polypeptide is Phenylalanine--tRNA ligase beta subunit (Chlamydia abortus (strain DSM 27085 / S26/3) (Chlamydophila abortus)).